We begin with the raw amino-acid sequence, 325 residues long: Probable NADH kinase (325 aa).

The protein belongs to the NAD kinase family. In terms of assembly, homodimer.

It localises to the cytoplasm. It catalyses the reaction NADH + ATP = ADP + NADPH + H(+). Functionally, key source of the cellular reductant NADPH which is an important antioxidant factor. This chain is Probable NADH kinase, found in Oryza sativa subsp. japonica (Rice).